The primary structure comprises 494 residues: MWNRRQGRLRTLAFGVEELRRRRREREAALRKARREQQLVSKRLLREDAPEEVGGQSAAVLLGEAEVQQFLRLAQRGTDEKEREKALVSLRRGLQHPDTQQTFIRLEGSMRTLVGILTSNRALLQLEAARCLHELSHSEQSAVAEACLPATSYLLTYLSGHSSDFIELCLYTLGNLIVESEAVRKQLLPQGIVPAFAACIQSPHVAVLEALGYALSQLLQAKEAPEKIIPSILDSSLPQQMLWLMQPGPKLNLGVAMEFAWCLHYIICSQVNNAVLLTHGALPTLALLLLDLAGTVQRMDDVGLELLACPVLRCLSNLLTEVPAEVMGQQMELRDERLVAALFIFLQFFLQKQPALLPEGLWLLNNLTANSPTFCTSLLSLDLIEPLLQLLPLSNAVCMLVLTVLCNVVEKGPAYCQRLWPGPLLSCVLNTLALSDTEVVGQSLELLQLLFLHQPEAARAFLQQSGLQALEKLQEETQLQERIHALQQIAATHG.

The stretch at 15–39 forms a coiled coil; it reads GVEELRRRRREREAALRKARREQQL. 2 helical membrane passes run 338–358 and 386–406; these read LVAALFIFLQFFLQKQPALLP and PLLQLLPLSNAVCMLVLTVLC.

It is found in the membrane. This Mus musculus (Mouse) protein is Transmembrane and coiled-coil domain-containing protein 6 (Tmco6).